The following is a 408-amino-acid chain: Solute carrier family 35 member F1 (408 aa).

Residues 1–20 (MIPPEPPQPQLQPPPPPAPP) are disordered. The next 10 membrane-spanning stretches (helical) occupy residues 60 to 80 (MLIS…IGLT), 94 to 114 (VFQS…TLAV), 129 to 147 (WWKY…YLVV), 159 to 179 (QLLD…FLLI), 186 to 206 (FIGI…DVLV), 221 to 241 (LLVL…ESII), 247 to 267 (VEFL…QLAI), 284 to 304 (LLYV…PVVI), 311 to 331 (SVNL…LFLF), and 335 to 355 (FSGL…LYSS).

Belongs to the SLC35F solute transporter family.

It is found in the cytoplasmic vesicle. The protein localises to the secretory vesicle. Its subcellular location is the synaptic vesicle membrane. In terms of biological role, putative solute transporter. The chain is Solute carrier family 35 member F1 (Slc35f1) from Mus musculus (Mouse).